We begin with the raw amino-acid sequence, 339 residues long: uncharacterized protein (339 aa).

Positions 1 to 12 (MDIDLNNQTDNN) are enriched in polar residues. The interval 1–30 (MDIDLNNQTDNNELIVEDTENPKNPNSTNI) is disordered.

This is an uncharacterized protein from Acanthamoeba polyphaga (Amoeba).